A 355-amino-acid chain; its full sequence is Syntaxin-5 (355 aa).

The Cytoplasmic portion of the chain corresponds to 1 to 333; sequence MIPRKRYGSK…KYFQSVTSNR (333 aa). Residues 28-37 show a composition bias toward polar residues; sequence PATAGSSSSD. The disordered stretch occupies residues 28 to 51; it reads PATAGSSSSDIAPLPPPVTLVPPP. Residues 40-51 are compositionally biased toward pro residues; the sequence is PLPPPVTLVPPP. The short motif at 245–247 is the IxM motif; signal for cargo packaging into COPII-coated vesicles element; sequence IDM. Positions 263–325 constitute a t-SNARE coiled-coil homology domain; the sequence is DSYIQSRADT…EAAHSEILKY (63 aa). The stretch at 287-318 forms a coiled coil; sequence FQQLAHMVKEQEETIQRIDENVLGAQLDVEAA. The chain crosses the membrane as a helical; Anchor for type IV membrane protein span at residues 334-354; it reads WLMVKIFLILIVFFIIFVVFL. Ala-355 is a topological domain (vesicular).

It belongs to the syntaxin family. In terms of assembly, part of a ternary complex containing STX5A, NSFL1C and VCP. Identified in a unique SNARE complex composed of the Golgi SNAREs GOSR1, GOSR2, YKT6 and VTI1A. Component of a SNARE complex consisting of STX5, YKT6, GOSR1 and BET1L. Interacts with BET1L. Interacts with BET1. Interacts with COG4. Interacts with GM130/GOLGA2. Interacts (via IxM motif) with SEC24C and SEC24D; mediates STX5 packaging into COPII-coated vesicles. Interacts with VLDLR; this interaction mediates VLDLR translocation from the endoplasmic reticulum to the plasma membrane.

The protein resides in the endoplasmic reticulum-Golgi intermediate compartment membrane. The protein localises to the golgi apparatus membrane. Functionally, mediates endoplasmic reticulum to Golgi transport. Together with p115/USO1 and GM130/GOLGA2, involved in vesicle tethering and fusion at the cis-Golgi membrane to maintain the stacked and inter-connected structure of the Golgi apparatus. In terms of biological role, required for Golgi to endoplasmic reticulum retrogade transport, and for intra-Golgi transport. Its function is as follows. (Microbial infection) Required for the efficient production of infectious virion during human cytomegalovirus infection. Mechanistically, participates in the formation of the cytoplasmic viral assembly compartment where tegument acquisition and envelopment occur. The polypeptide is Syntaxin-5 (STX5) (Homo sapiens (Human)).